The chain runs to 217 residues: Transcriptional regulatory protein CutR (217 aa).

A Response regulatory domain is found at 2 to 116 (RVLVVEDEQL…ELIARVRALG (115 aa)). At Asp51 the chain carries 4-aspartylphosphate. A DNA-binding region (ompR/PhoB-type) is located at residues 124–217 (PPVLERAGIK…VTVPGSGYRI (94 aa)).

Functionally, member of the two-component regulatory system CutS/CutR, involved in the regulation of copper metabolism. CutR suppresses a defective melC1 gene, encoding a putative copper-transfer gene, probably by altering copper metabolism. The polypeptide is Transcriptional regulatory protein CutR (cutR) (Streptomyces lividans).